A 238-amino-acid chain; its full sequence is Ribitol-5-phosphate cytidylyltransferase 1 (238 aa).

CTP-binding positions include 7 to 10 (LAGG) and 81 to 87 (GSDRNDT).

This sequence belongs to the IspD/TarI cytidylyltransferase family. TarI subfamily.

It catalyses the reaction D-ribitol 5-phosphate + CTP + H(+) = CDP-L-ribitol + diphosphate. The protein operates within cell wall biogenesis; poly(ribitol phosphate) teichoic acid biosynthesis. Functionally, catalyzes the transfer of the cytidylyl group of CTP to D-ribitol 5-phosphate. This chain is Ribitol-5-phosphate cytidylyltransferase 1, found in Staphylococcus aureus (strain USA300).